The following is a 114-amino-acid chain: uncharacterized protein (114 aa).

It to E.coli YggL.

This is an uncharacterized protein from Haemophilus influenzae (strain ATCC 51907 / DSM 11121 / KW20 / Rd).